Here is a 225-residue protein sequence, read N- to C-terminus: NAD(P)H-quinone oxidoreductase subunit K, chloroplastic (225 aa).

Residues Cys-43, Cys-44, Cys-108, and Cys-139 each coordinate [4Fe-4S] cluster.

It belongs to the complex I 20 kDa subunit family. In terms of assembly, NDH is composed of at least 16 different subunits, 5 of which are encoded in the nucleus. The cofactor is [4Fe-4S] cluster.

It localises to the plastid. It is found in the chloroplast thylakoid membrane. The enzyme catalyses a plastoquinone + NADH + (n+1) H(+)(in) = a plastoquinol + NAD(+) + n H(+)(out). The catalysed reaction is a plastoquinone + NADPH + (n+1) H(+)(in) = a plastoquinol + NADP(+) + n H(+)(out). Functionally, NDH shuttles electrons from NAD(P)H:plastoquinone, via FMN and iron-sulfur (Fe-S) centers, to quinones in the photosynthetic chain and possibly in a chloroplast respiratory chain. The immediate electron acceptor for the enzyme in this species is believed to be plastoquinone. Couples the redox reaction to proton translocation, and thus conserves the redox energy in a proton gradient. The protein is NAD(P)H-quinone oxidoreductase subunit K, chloroplastic of Crucihimalaya wallichii (Rock-cress).